The following is a 330-amino-acid chain: MPEFVTFSRNVFIPVTNICRNLCGYCTFRRDAGHPEAHLMSMSEIRPILERGEKAGCTEALFVFGEYAEEVPEYLLELEKLGYSTTVEYVADLCKLAIEIGLLPHTNAGILNRKELEILKPLNISMGLMLETTAELKAHSESPGKKPSTRIEMIRTAGKLKIPFTTGILVGIGETKDDRKRSLNTIADIHKEFGHIQEVIIQNFMPKPDTPMADHAPPSKEEMIDTVAIAREILPSDVAVQVAPNLIDPYSLIKAGASDLGGISPTTIDWINPEAEWPDVIELQKMIKEIELRERLPIYPQHIKKGWYSNNLSYLIETLTDKNGFKRKQR.

Positions 5–245 constitute a Radical SAM core domain; that stretch reads VTFSRNVFIP…SDVAVQVAPN (241 aa). [4Fe-4S] cluster-binding residues include cysteine 19, cysteine 23, and cysteine 26.

Belongs to the radical SAM superfamily. CofG family. Consists of two subunits, CofG and CofH. [4Fe-4S] cluster is required as a cofactor.

It catalyses the reaction 5-amino-5-(4-hydroxybenzyl)-6-(D-ribitylimino)-5,6-dihydrouracil + S-adenosyl-L-methionine = 7,8-didemethyl-8-hydroxy-5-deazariboflavin + 5'-deoxyadenosine + L-methionine + NH4(+) + H(+). It participates in cofactor biosynthesis; coenzyme F0 biosynthesis. Its function is as follows. Catalyzes the radical-mediated synthesis of 7,8-didemethyl-8-hydroxy-5-deazariboflavin from 5-amino-5-(4-hydroxybenzyl)-6-(D-ribitylimino)-5,6-dihydrouracil. The sequence is that of 7,8-didemethyl-8-hydroxy-5-deazariboflavin synthase from Methanococcoides burtonii (strain DSM 6242 / NBRC 107633 / OCM 468 / ACE-M).